A 416-amino-acid chain; its full sequence is Gamma-glutamyl phosphate reductase (416 aa).

The protein belongs to the gamma-glutamyl phosphate reductase family.

It localises to the cytoplasm. The catalysed reaction is L-glutamate 5-semialdehyde + phosphate + NADP(+) = L-glutamyl 5-phosphate + NADPH + H(+). Its pathway is amino-acid biosynthesis; L-proline biosynthesis; L-glutamate 5-semialdehyde from L-glutamate: step 2/2. Catalyzes the NADPH-dependent reduction of L-glutamate 5-phosphate into L-glutamate 5-semialdehyde and phosphate. The product spontaneously undergoes cyclization to form 1-pyrroline-5-carboxylate. This is Gamma-glutamyl phosphate reductase from Salmonella newport (strain SL254).